We begin with the raw amino-acid sequence, 430 residues long: UDP-N-acetylglucosamine 1-carboxyvinyltransferase (430 aa).

22–23 contacts phosphoenolpyruvate; the sequence is KN. R102 contacts UDP-N-acetyl-alpha-D-glucosamine. C126 acts as the Proton donor in catalysis. At C126 the chain carries 2-(S-cysteinyl)pyruvic acid O-phosphothioketal. Residues 131 to 135, 172 to 175, D317, and I339 each bind UDP-N-acetyl-alpha-D-glucosamine; these read RPVDL and KVSV.

The protein belongs to the EPSP synthase family. MurA subfamily.

The protein localises to the cytoplasm. It catalyses the reaction phosphoenolpyruvate + UDP-N-acetyl-alpha-D-glucosamine = UDP-N-acetyl-3-O-(1-carboxyvinyl)-alpha-D-glucosamine + phosphate. The protein operates within cell wall biogenesis; peptidoglycan biosynthesis. Its function is as follows. Cell wall formation. Adds enolpyruvyl to UDP-N-acetylglucosamine. In Rhizobium leguminosarum bv. trifolii (strain WSM2304), this protein is UDP-N-acetylglucosamine 1-carboxyvinyltransferase.